The chain runs to 618 residues: Alpha-dioxygenase PIOX (618 aa).

His157 (proton acceptor) is an active-site residue. Asp158 is a binding site for Ca(2+). Heme b is bound at residue His162. Positions 210, 212, 214, and 216 each coordinate Ca(2+). Hexadecanoate is bound at residue His311. Residues His382, Arg479, and Arg483 each contribute to the heme b site. Glu599 contributes to the hexadecanoate binding site.

This sequence belongs to the peroxidase family. Heme b is required as a cofactor. The cofactor is Ca(2+).

The catalysed reaction is a 1,2-saturated fatty acid + O2 = a (2R)-2-hydroperoxy fatty acid. It carries out the reaction (9Z,12Z)-octadecadienoate + O2 = (2R,9Z,12Z)-2-hydroperoxyoctadecadienoate. It catalyses the reaction hexadecanoate + O2 = (2R)-2-hydroperoxyhexadecanoate. The enzyme catalyses (9Z,12Z,15Z)-octadecatrienoate + O2 = (R)-2-hydroperoxy-(9Z,12Z,15Z)-octadecatrienoate. The catalysed reaction is tetradecanoate + O2 = (2R)-2-hydroperoxytetradecanoate. It carries out the reaction octadecanoate + O2 = (2R)-2-hydroperoxyoctadecanoate. It catalyses the reaction (9Z)-octadecenoate + O2 = (2R,9Z)-2-hydroperoxyoctadecenoate. Its function is as follows. Alpha-dioxygenase that catalyzes the primary oxygenation step of a variety of 14-20 carbon fatty acids, containing up to three unsaturated bonds, into their corresponding 2R-hydroperoxides. Involved in the production of oxylipins that function in cell signaling, wound healing, and protection from infection. The polypeptide is Alpha-dioxygenase PIOX (Oryza sativa subsp. japonica (Rice)).